A 226-amino-acid polypeptide reads, in one-letter code: UPF0758 protein Daci_1904 (226 aa).

One can recognise an MPN domain in the interval 104 to 226 (ALASPEAVAR…SLSMAGQGML (123 aa)). Residues histidine 175, histidine 177, and aspartate 188 each coordinate Zn(2+). Residues 175-188 (HNHPSGQVQASAAD) carry the JAMM motif motif.

It belongs to the UPF0758 family.

This is UPF0758 protein Daci_1904 from Delftia acidovorans (strain DSM 14801 / SPH-1).